The primary structure comprises 244 residues: Acetoacetate decarboxylase (244 aa).

Residue lysine 115 is the Schiff-base intermediate with acetoacetate of the active site.

This sequence belongs to the ADC family.

The catalysed reaction is acetoacetate + H(+) = acetone + CO2. Catalyzes the conversion of acetoacetate to acetone and carbon dioxide. This chain is Acetoacetate decarboxylase, found in Streptomyces nogalater.